The following is a 517-amino-acid chain: Cytochrome P450 78A5 (517 aa).

The helical transmembrane segment at 20 to 40 (AFASVSLIIATVAFLLSPGGL) threads the bilayer. Residue cysteine 459 coordinates heme.

It belongs to the cytochrome P450 family. Heme serves as cofactor. In terms of tissue distribution, expressed in the periphery of the shoot apical meristem and inflorescence meristem, on the adaxial sides of developing floral organs and in developing ovules in the region where the integuments emerge.

It localises to the membrane. In terms of biological role, plays a role in regulating directional growth at the meristem/organ boundary. Is required for the promotion of leaf and floral organ growth and for the prolongation of the plastochron. Promotes organ growth in a non-cell-autonomous manner and may generate a mobile growth signal distinct from the classical phytohormones that prevents premature arrest of proliferation, until the correct primordium size has been reached. Functions probably in association with CYP78A7 in regulating relative growth of the shoot apical meristem and plant organs. Is required locally in developing ovules to stimulates cell proliferation and promote seed growth. This Arabidopsis thaliana (Mouse-ear cress) protein is Cytochrome P450 78A5 (CYP78A5).